The chain runs to 228 residues: uncharacterized protein (228 aa).

The interval 1–34 is disordered; the sequence is MPRDTKPYSRPANAPRPGVKTERSNQFKAASTKY.

This is an uncharacterized protein from Orgyia pseudotsugata (Douglas-fir tussock moth).